The sequence spans 81 residues: Arminin 2a (81 aa).

The first 18 residues, 1–18 (MKTVFAILFLAFIALTYA), serve as a signal peptide directing secretion. Residues 19 to 57 (RSYEDVKEEIKNEVVKEILEDLEEESDELDDKSKEINDA) constitute a propeptide that is removed on maturation. Position 78 is an alanine amide (A78).

This sequence belongs to the arminin family. In terms of tissue distribution, expressed in entodermal epithelium along the body column.

The protein resides in the secreted. The protein localises to the target cell membrane. Antimicrobial peptide with a broad-spectrum antimicrobial activity. Keeps its antibacterial activity under a wide range of salt concentrations that mimic physiological conditions of human blood, which is surprising, since Hydra is an obligate freshwater animal with nearly no salt tolerance. Does not affect red blood cells. The protein is Arminin 2a of Hydra vulgaris (Hydra).